A 711-amino-acid polypeptide reads, in one-letter code: Exotoxin translocation ATP-binding protein PaxB (711 aa).

Residues 1 to 129 form the Peptidase C39 domain; that stretch reads MEPLMSFKQK…QVFQGNVILL (129 aa). Transmembrane regions (helical) follow at residues 157–177, 195–215, 273–293, 299–319, and 392–412; these read IFVE…ITPL, LNVI…LSGL, ALTS…MWYY, IVIL…SPIL, and VMII…LSIG. The ABC transmembrane type-1 domain maps to 158–440; sequence FVEVMIVSIF…LAQLWQDFQQ (283 aa). One can recognise an ABC transporter domain in the interval 472 to 707; the sequence is VTFKNIRFRY…KDGLYYYLNQ (236 aa). Position 506–513 (506–513) interacts with ATP; the sequence is GRSGSGKS.

The protein belongs to the ABC transporter superfamily. Protein-1 exporter (TC 3.A.1.109) family. As to quaternary structure, homodimer.

The protein resides in the cell inner membrane. It catalyses the reaction ATP + H2O + proteinSide 1 = ADP + phosphate + proteinSide 2.. In terms of biological role, part of the ABC transporter complex PaxBD involved in PaxA export. Transmembrane domains (TMD) form a pore in the inner membrane and the ATP-binding domain (NBD) is responsible for energy generation. This is Exotoxin translocation ATP-binding protein PaxB (paxB) from Pasteurella aerogenes.